The sequence spans 243 residues: 1-(5-phosphoribosyl)-5-[(5-phosphoribosylamino)methylideneamino] imidazole-4-carboxamide isomerase (243 aa).

Residue aspartate 8 is the Proton acceptor of the active site. Residue aspartate 129 is the Proton donor of the active site.

The protein belongs to the HisA/HisF family.

It is found in the cytoplasm. It catalyses the reaction 1-(5-phospho-beta-D-ribosyl)-5-[(5-phospho-beta-D-ribosylamino)methylideneamino]imidazole-4-carboxamide = 5-[(5-phospho-1-deoxy-D-ribulos-1-ylimino)methylamino]-1-(5-phospho-beta-D-ribosyl)imidazole-4-carboxamide. It functions in the pathway amino-acid biosynthesis; L-histidine biosynthesis; L-histidine from 5-phospho-alpha-D-ribose 1-diphosphate: step 4/9. This is 1-(5-phosphoribosyl)-5-[(5-phosphoribosylamino)methylideneamino] imidazole-4-carboxamide isomerase from Nitratidesulfovibrio vulgaris (strain DSM 19637 / Miyazaki F) (Desulfovibrio vulgaris).